Reading from the N-terminus, the 436-residue chain is UDP-N-acetylmuramate--L-alanine ligase (436 aa).

110 to 116 (GAHGKTS) lines the ATP pocket.

This sequence belongs to the MurCDEF family.

It localises to the cytoplasm. It catalyses the reaction UDP-N-acetyl-alpha-D-muramate + L-alanine + ATP = UDP-N-acetyl-alpha-D-muramoyl-L-alanine + ADP + phosphate + H(+). It functions in the pathway cell wall biogenesis; peptidoglycan biosynthesis. In terms of biological role, cell wall formation. This Lacticaseibacillus casei (strain BL23) (Lactobacillus casei) protein is UDP-N-acetylmuramate--L-alanine ligase.